The sequence spans 537 residues: Glutamyl-tRNA reductase, chloroplastic (537 aa).

A chloroplast-targeting transit peptide spans 1-48 (MMASTTSATAAGGAFAAAKTRAGSSAAGGGACARVAAGGRRRSGVVVR). Substrate-binding positions include 134 to 137 (TCNR), Ser194, 199 to 201 (EGQ), and Gln205. Cys135 functions as the Nucleophile in the catalytic mechanism. 276–281 (GAGKMG) lines the NADP(+) pocket.

Belongs to the glutamyl-tRNA reductase family.

The protein localises to the plastid. It localises to the chloroplast. The enzyme catalyses (S)-4-amino-5-oxopentanoate + tRNA(Glu) + NADP(+) = L-glutamyl-tRNA(Glu) + NADPH + H(+). Its pathway is porphyrin-containing compound metabolism; protoporphyrin-IX biosynthesis; 5-aminolevulinate from L-glutamyl-tRNA(Glu): step 1/2. In terms of biological role, catalyzes the NADPH-dependent reduction of glutamyl-tRNA(Glu) to glutamate 1-semialdehyde (GSA). The polypeptide is Glutamyl-tRNA reductase, chloroplastic (Oryza sativa subsp. japonica (Rice)).